We begin with the raw amino-acid sequence, 434 residues long: Homogentisate 1,2-dioxygenase (434 aa).

His289 acts as the Proton acceptor in catalysis. Residues His332 and Glu338 each coordinate Fe cation. Homogentisate contacts are provided by Tyr347 and His368. Position 368 (His368) interacts with Fe cation.

It belongs to the homogentisate dioxygenase family. In terms of assembly, hexamer; dimer of trimers. Requires Fe cation as cofactor.

It carries out the reaction homogentisate + O2 = 4-maleylacetoacetate + H(+). The protein operates within amino-acid degradation; L-phenylalanine degradation; acetoacetate and fumarate from L-phenylalanine: step 4/6. Functionally, involved in the catabolism of homogentisate (2,5-dihydroxyphenylacetate or 2,5-OH-PhAc), a central intermediate in the degradation of phenylalanine and tyrosine. Catalyzes the oxidative ring cleavage of the aromatic ring of homogentisate to yield maleylacetoacetate. In Pseudomonas syringae pv. tomato (strain ATCC BAA-871 / DC3000), this protein is Homogentisate 1,2-dioxygenase.